The following is a 1472-amino-acid chain: Adhesion G protein-coupled receptor L1 (1472 aa).

An N-terminal signal peptide occupies residues 1–24 (MARLAAVLWSLCVTAILVTSATQG). Residues 25-857 (LSRAGLPFGL…EIYQGRINEL (833 aa)) are Extracellular-facing. Residues 40 to 129 (ACEGYPIELR…KYLEVQYDCV (90 aa)) form the SUEL-type lectin domain. 5 disulfides stabilise this stretch: Cys41–Cys71, Cys50–Cys128, Cys83–Cys115, Cys96–Cys102, and Cys140–Cys322. Residue Glu42 participates in alpha-L-rhamnose binding. Residue Asn98 is glycosylated (N-linked (GlcNAc...) asparagine). 117–120 (GTYK) contacts alpha-L-rhamnose. The region spanning 139-398 (VCPGTLQKVL…VVRYSLEFGP (260 aa)) is the Olfactomedin-like domain. The interval 400 to 468 (DPSAGPATSP…APAPSTRRPP (69 aa)) is disordered. Positions 405 to 441 (PATSPPLSTTTTARPTPLTSTASPAATTPLRRAPLTT) are enriched in low complexity. A compositionally biased stretch (pro residues) spans 453 to 468 (DLPPATAPAPSTRRPP). 2 disulfides stabilise this stretch: Cys480/Cys515 and Cys503/Cys532. Residues Asn531, Asn640, Asn741, Asn800, Asn805, and Asn826 are each glycosylated (N-linked (GlcNAc...) asparagine). Residues 669–850 (PARFLAAKQN…AVLMAHREIY (182 aa)) form the GAIN-B domain. 2 cysteine pairs are disulfide-bonded: Cys801/Cys832 and Cys820/Cys834. Residues 801 to 850 (CSFWNYSERSMLGYWSTQGCRLVESNKTHTTCACSHLTNFAVLMAHREIY) are GPS. A helical transmembrane segment spans residues 858–878 (LLSVITWVGIVISLVCLAICI). The Cytoplasmic portion of the chain corresponds to 879–892 (STFCFLRGLQTDRN). The helical transmembrane segment at 893 to 913 (TIHKNLCINLFLAELLFLVGI) threads the bilayer. The Extracellular segment spans residues 914–919 (DKTQYE). The chain crosses the membrane as a helical span at residues 920–940 (IACPIFAGLLHYFFLAAFSWL). At 941–963 (CLEGVHLYLLLVEVFESEYSRTK) the chain is on the cytoplasmic side. A helical transmembrane segment spans residues 964 to 984 (YYYLGGYCFPALVVGIAAAID). Residues 985–1001 (YRSYGTEKACWLRVDNY) are Extracellular-facing. Residues 1002–1022 (FIWSFIGPVSFVIVVNLVFLM) traverse the membrane as a helical segment. Residues 1023-1049 (VTLHKMVRSSSVLKPDSSRLDNIKSWA) are Cytoplasmic-facing. Residues 1050-1070 (LGAIALLFLLGLTWAFGLLFI) form a helical membrane-spanning segment. Residues 1071-1074 (NKES) are Extracellular-facing. A helical membrane pass occupies residues 1075-1095 (VVMAYLFTTFNAFQGVFIFVF). Residues 1096–1472 (HCALQKKVHK…DGQMQLVTSL (377 aa)) lie on the Cytoplasmic side of the membrane. Omega-N-methylarginine is present on Arg1193. The residue at position 1219 (Ser1219) is a Phosphoserine. Disordered stretches follow at residues 1247–1271 (FNNSYSLRSGDFPPGDGAPEPPRGR), 1291–1325 (NLRGGSSGAKGPPPPEPPVPPVPGGSGEEEAGGPG), 1358–1427 (ESES…SRPP), and 1449–1472 (YLAAPGLEGPGPDGDGQMQLVTSL). Composition is skewed to pro residues over residues 1301–1313 (GPPPPEPPVPPVP) and 1406–1418 (ALPPPPPAPPGPP). Position 1471 is a phosphoserine (Ser1471).

The protein belongs to the G-protein coupled receptor 2 family. Adhesion G-protein coupled receptor (ADGR) subfamily. In terms of assembly, forms a heterodimer, consisting of a large extracellular region (p120) non-covalently linked to a seven-transmembrane moiety (p85). Interacts with syntaxin and with proteins of the SHANK family via the PDZ domain. Interacts (via extracellular domain) with FLRT1, FLRT2 and FLRT3 (via extracellular domain). Post-translationally, autoproteolytically cleaved into 2 subunits, an extracellular subunit and a seven-transmembrane subunit. This proteolytic processing takes place early in the biosynthetic pathway, either in the endoplasmic reticulum or in the early compartment of the Golgi apparatus. As to expression, brain-specific expression but low levels are also detected in kidney, lung and spleen.

Its subcellular location is the cell membrane. It is found in the cell projection. The protein localises to the axon. It localises to the growth cone. The protein resides in the synapse. Its subcellular location is the presynaptic cell membrane. It is found in the synaptosome. Its function is as follows. Calcium-independent receptor of high affinity for alpha-latrotoxin, an excitatory neurotoxin present in black widow spider venom which triggers massive exocytosis from neurons and neuroendocrine cells. Receptor for TENM2 that mediates heterophilic synaptic cell-cell contact and postsynaptic specialization. Receptor probably implicated in the regulation of exocytosis. The polypeptide is Adhesion G protein-coupled receptor L1 (Bos taurus (Bovine)).